The chain runs to 337 residues: Lipopolysaccharide 1,3-galactosyltransferase (337 aa).

Residues 33 to 38 (GIDKNF) and 130 to 131 (DA) each bind UDP. Mg(2+) is bound by residues aspartate 130 and aspartate 132. 2 consecutive short sequence motifs (DXD) follow at residues 130 to 132 (DAD) and 219 to 221 (DQD). Histidine 264 contributes to the Mg(2+) binding site. Residue 264 to 270 (HYIGPTK) participates in UDP binding.

It belongs to the glycosyltransferase 8 family. It depends on Mg(2+) as a cofactor.

The enzyme catalyses UDP-alpha-D-galactose + [lipopolysaccharide] = UDP + 3-alpha-D-galactosyl-[lipopolysaccharide].. It participates in bacterial outer membrane biogenesis; LPS core biosynthesis. Inhibited in a competitive manner by closely related nonsubstrate lipopolysaccharides. Its function is as follows. Galactosyltransferase involved in the biosynthesis of the core oligosaccharide region of lipopolysaccharide (LPS). Catalyzes the addition of an alpha l,3-linked galactose (galactose I) to the first outer-core glucose (glucose I). Cannot use UDP-glucose. Activity probably does not require the branched galactose added by WaaB, but it is higher in the presence of this branched galactose. This is Lipopolysaccharide 1,3-galactosyltransferase from Salmonella typhimurium (strain LT2 / SGSC1412 / ATCC 700720).